We begin with the raw amino-acid sequence, 144 residues long: Large ribosomal subunit protein uL15 (144 aa).

The interval 1–56 is disordered; that stretch reads MELNNLKPAAGAKHAKRRVGRGIGSGLGKTAGRGHKGQKSRSGGFHKVGFEGGQMP. Over residues 21 to 31 the composition is skewed to gly residues; that stretch reads RGIGSGLGKTA.

This sequence belongs to the universal ribosomal protein uL15 family. In terms of assembly, part of the 50S ribosomal subunit.

Its function is as follows. Binds to the 23S rRNA. This is Large ribosomal subunit protein uL15 from Burkholderia multivorans (strain ATCC 17616 / 249).